A 162-amino-acid chain; its full sequence is HTH-type transcriptional regulator IscR (162 aa).

The HTH rrf2-type domain occupies 2 to 131 (RLTSKGRYAV…NNITLGELVN (130 aa)). Residues 28-51 (LADISERQGISLSYLEQLFSRLRK) constitute a DNA-binding region (H-T-H motif). [2Fe-2S] cluster-binding residues include Cys92, Cys98, and Cys104. A disordered region spans residues 141–162 (RQHNEAHRPTRAQDAIDVKLRA).

[2Fe-2S] cluster serves as cofactor.

Its function is as follows. Regulates the transcription of several operons and genes involved in the biogenesis of Fe-S clusters and Fe-S-containing proteins. The polypeptide is HTH-type transcriptional regulator IscR (Cronobacter sakazakii (strain ATCC BAA-894) (Enterobacter sakazakii)).